Here is a 227-residue protein sequence, read N- to C-terminus: Endo-1,4-beta-xylanase 1 (227 aa).

The first 19 residues, 1-19, serve as a signal peptide directing secretion; the sequence is MVSLKSVLAAATAVSSAIA. Residues 37–225 form the GH11 domain; the sequence is QVTPNAEGWH…SSGESDIYVQ (189 aa). Glu121 acts as the Nucleophile in catalysis. The Proton donor role is filled by Glu212.

The protein belongs to the glycosyl hydrolase 11 (cellulase G) family.

It catalyses the reaction Endohydrolysis of (1-&gt;4)-beta-D-xylosidic linkages in xylans.. The protein operates within glycan degradation; xylan degradation. The protein is Endo-1,4-beta-xylanase 1 of Humicola insolens (Soft-rot fungus).